Reading from the N-terminus, the 238-residue chain is Ribonuclease PH (238 aa).

Phosphate contacts are provided by residues Arg86 and 124–126 (GTR).

It belongs to the RNase PH family. As to quaternary structure, homohexameric ring arranged as a trimer of dimers.

It carries out the reaction tRNA(n+1) + phosphate = tRNA(n) + a ribonucleoside 5'-diphosphate. Functionally, phosphorolytic 3'-5' exoribonuclease that plays an important role in tRNA 3'-end maturation. Removes nucleotide residues following the 3'-CCA terminus of tRNAs; can also add nucleotides to the ends of RNA molecules by using nucleoside diphosphates as substrates, but this may not be physiologically important. Probably plays a role in initiation of 16S rRNA degradation (leading to ribosome degradation) during starvation. The sequence is that of Ribonuclease PH from Serratia proteamaculans (strain 568).